We begin with the raw amino-acid sequence, 441 residues long: Chitinase-like protein Idgf3 (441 aa).

The first 23 residues, 1 to 23 (MTGSLWLSLALSLAVLAQFKVSA), serve as a signal peptide directing secretion. Positions 25 to 441 (PNLVCFYDSQ…MLRAIKYRLL (417 aa)) constitute a GH18 domain. The cysteines at positions 29 and 56 are disulfide-linked. The N-linked (GlcNAc...) asparagine glycan is linked to Asn-221. The tract at residues 309–331 (SGDSGMPVVPSTQGPAPAGPQSK) is disordered. Cys-342 and Cys-425 are oxidised to a cystine.

Belongs to the glycosyl hydrolase 18 family. IDGF subfamily. In terms of processing, glycosylated.

The protein localises to the secreted. Functionally, cooperates with insulin-like peptides to stimulate the proliferation, polarization and motility of imaginal disk cells. May act by stabilizing the binding of insulin-like peptides to its receptor through a simultaneous interaction with both molecules to form a multiprotein signaling complex. The sequence is that of Chitinase-like protein Idgf3 (Idgf3) from Drosophila yakuba (Fruit fly).